We begin with the raw amino-acid sequence, 233 residues long: Putative N-acetylmuramoyl-L-alanine amidase (233 aa).

The MurNAc-LAA domain maps to 1 to 219 (MIDPGHGGQD…IANAIYIALK (219 aa)).

Belongs to the N-acetylmuramoyl-L-alanine amidase 3 family.

The protein localises to the secreted. It carries out the reaction Hydrolyzes the link between N-acetylmuramoyl residues and L-amino acid residues in certain cell-wall glycopeptides.. In terms of biological role, cell-wall hydrolase involved in septum cleavage during cell division. This Buchnera aphidicola subsp. Schizaphis graminum (strain Sg) protein is Putative N-acetylmuramoyl-L-alanine amidase (amiB).